A 118-amino-acid chain; its full sequence is Basic phospholipase A2 acanthin-2 (118 aa).

Cystine bridges form between cysteine 11-cysteine 71, cysteine 27-cysteine 117, cysteine 29-cysteine 45, cysteine 44-cysteine 98, cysteine 51-cysteine 91, cysteine 60-cysteine 84, and cysteine 78-cysteine 89. The Ca(2+) site is built by tyrosine 28, glycine 30, and glycine 32. Residue histidine 48 is part of the active site. Aspartate 49 contributes to the Ca(2+) binding site. Aspartate 92 is an active-site residue.

Ca(2+) is required as a cofactor. As to expression, expressed by the venom gland.

It is found in the secreted. The catalysed reaction is a 1,2-diacyl-sn-glycero-3-phosphocholine + H2O = a 1-acyl-sn-glycero-3-phosphocholine + a fatty acid + H(+). Functionally, snake venom phospholipase A2 (PLA2) that potently inhibits ADP-(IC(50)=12 nM) and collagen-induced (IC(50)=4 nM) platelet aggregation when tested on human whole blood. PLA2 catalyzes the calcium-dependent hydrolysis of the 2-acyl groups in 3-sn-phosphoglycerides. The polypeptide is Basic phospholipase A2 acanthin-2 (Acanthophis antarcticus (Common death adder)).